We begin with the raw amino-acid sequence, 497 residues long: MPPMTKAEGKQDKKAQQYGVTPQSVDFNDWYNEVVKKADLADNSPVAGAMVVKPYGTALWENIQRWLDDRFKATGHESLIFPTLIPMNFITKEADHVEGFAPELFTVDRIGTEQLTEPYVLRPTSETIIGYMWSGWLNSYRDLPFLHYQWGSVFRAELRTKAFLRTSEFYWHEGHTAHASEEEARREVRQILDLYHEFCRDILALPVVRGEKTASERFAGAVATYSIEGMMRDGKALQSGTSHYLGQNFSKAFDVKFQTREQREEYAYTTSWAISSRIIGAIIMTHGDDFGLIMPPRIAPIQVVVIPVSRKENFDQMVAEGEKLAHELRAQGLRVKVDRREGVTNGFKYNDWELKGVPVRIELGPRDLEQGVVVVKNRNAEEKETLPREEAIRGMANRLDSIHNWLLQRATDFLLTHTVPADSYEELKNAIEHGNWVRAFHCGNAECEAQIKEDTKATTRNIPLDDAEFFNEREEGVCVKCGQPSAYGKRVIFGRQY.

The protein belongs to the class-II aminoacyl-tRNA synthetase family. ProS type 3 subfamily. As to quaternary structure, homodimer.

The protein localises to the cytoplasm. It catalyses the reaction tRNA(Pro) + L-proline + ATP = L-prolyl-tRNA(Pro) + AMP + diphosphate. Its function is as follows. Catalyzes the attachment of proline to tRNA(Pro) in a two-step reaction: proline is first activated by ATP to form Pro-AMP and then transferred to the acceptor end of tRNA(Pro). In Deinococcus geothermalis (strain DSM 11300 / CIP 105573 / AG-3a), this protein is Proline--tRNA ligase.